The primary structure comprises 230 residues: Endonuclease NucS (230 aa).

This sequence belongs to the NucS endonuclease family.

It localises to the cytoplasm. Its function is as follows. Cleaves both 3' and 5' ssDNA extremities of branched DNA structures. The sequence is that of Endonuclease NucS from Corynebacterium efficiens (strain DSM 44549 / YS-314 / AJ 12310 / JCM 11189 / NBRC 100395).